The chain runs to 169 residues: Oleosin Cor a 15 (169 aa).

A run of 2 helical transmembrane segments spans residues 38–58 (IAVV…GLTF) and 70–90 (PLFV…GLAV). A Proline-knot motif is present at residues 70–81 (PLFVLCSPVLVP). Basic and acidic residues-rich tracts occupy residues 122-131 (QMEHAKRRAQ) and 160-169 (EGGRGEEKKT). The disordered stretch occupies residues 122–169 (QMEHAKRRAQDTAGHLGQKARETGQTVTGKGQEAGKTLEGGRGEEKKT).

The protein belongs to the oleosin family. In terms of tissue distribution, expressed in seeds (at protein level).

Its subcellular location is the lipid droplet. It is found in the membrane. May have a structural role to stabilize the lipid body during desiccation of the seed by preventing coalescence of the oil. Probably interacts with both lipid and phospholipid moieties of lipid bodies. May also provide recognition signals for specific lipase anchorage in lipolysis during seedling growth. This chain is Oleosin Cor a 15, found in Corylus avellana (European hazel).